Here is a 152-residue protein sequence, read N- to C-terminus: Methylglyoxal synthase (152 aa).

Residues 6-152 enclose the MGS-like domain; that stretch reads RTMATAKNIA…YQHYLNGRLK (147 aa). Residues H19, K23, 45–48, and 65–66 each bind substrate; these read TGTT and SG. D71 serves as the catalytic Proton donor/acceptor. A substrate-binding site is contributed by H98.

It belongs to the methylglyoxal synthase family.

It carries out the reaction dihydroxyacetone phosphate = methylglyoxal + phosphate. Functionally, catalyzes the formation of methylglyoxal from dihydroxyacetone phosphate. The sequence is that of Methylglyoxal synthase from Photorhabdus laumondii subsp. laumondii (strain DSM 15139 / CIP 105565 / TT01) (Photorhabdus luminescens subsp. laumondii).